Reading from the N-terminus, the 475-residue chain is Equilibrative nucleoside transporter 3 (475 aa).

Residues 1-24 (MAVVSEDDFQHSSNSTYRTTSSSL) are disordered. Topologically, residues 1–53 (MAVVSEDDFQHSSNSTYRTTSSSLRADQEALLEKLLDRPPPGLQRPEDRFCGT) are cytoplasmic. Low complexity predominate over residues 12–23 (SSNSTYRTTSSS). Ser21 and Ser23 each carry phosphoserine. Residues 31–32 (LL) carry the Dileucine internalization motif motif. A helical membrane pass occupies residues 54–74 (YIIFFSLGIGSLLPWNFFITA). Topologically, residues 75-105 (KEYWMFKLRNSSSPATGEDPEGSDILNYFES) are extracellular. An N-linked (GlcNAc...) asparagine glycan is attached at Asn84. A helical membrane pass occupies residues 106-126 (YLAVASTVPSMLCLVANFLLV). The Cytoplasmic portion of the chain corresponds to 127 to 134 (NRVAVHIR). Residues 135–155 (VLASLTVILAIFMVITALVKV) traverse the membrane as a helical segment. Over 156 to 162 (DTSSWTR) the chain is Extracellular. Residues 163-183 (GFFAVTIVCMVILSGASTVFS) traverse the membrane as a helical segment. At 184–199 (SSIYGMTGSFPMRNSQ) the chain is on the cytoplasmic side. The chain crosses the membrane as a helical span at residues 200–220 (ALISGGAMGGTVSAVASLVDL). Over 221 to 230 (AASSDVRNSA) the chain is Extracellular. A helical membrane pass occupies residues 231 to 251 (LAFFLTATVFLVLCMGLYLLL). Residues 252-305 (SRLEYARYYMRPVLAAHVFSGEEELPQDSLSAPSVASRFIDSHTPPLRPILKKT) lie on the Cytoplasmic side of the membrane. Residues 306 to 326 (ASLGFCVTYVFFITSLIYPAI) traverse the membrane as a helical segment. Over 327-337 (CTNIESLNKGS) the chain is Extracellular. Residues 338 to 358 (GSLWTTKFFIPLTTFLLYNFA) traverse the membrane as a helical segment. Over 359 to 377 (DLCGRQLTAWIQVPGPNSK) the chain is Cytoplasmic. Residues 378 to 398 (ALPGFVLLRTCLIPLFVLCNY) form a helical membrane-spanning segment. Topologically, residues 399-415 (QPRVHLKTVVFQSDVYP) are extracellular. The helical transmembrane segment at 416-436 (ALLSSLLGLSNGYLSTLALLY) threads the bilayer. Residues 437–454 (GPKIVPRELAEATGVVMS) lie on the Cytoplasmic side of the membrane. The chain crosses the membrane as a helical span at residues 455–475 (FYVCLGLTLGSACSTLLVHLI).

This sequence belongs to the SLC29A/ENT transporter (TC 2.A.57) family. As to expression, widely expressed in both adult and fetal tissues. Highest levels in placenta, uterus, ovary, spleen, lymph node and bone marrow. Expressed in liver. Lowest levels in brain and heart. Expressed in macrophages.

It is found in the lysosome membrane. Its subcellular location is the late endosome membrane. The protein resides in the mitochondrion membrane. The protein localises to the cell membrane. It catalyses the reaction adenosine(in) = adenosine(out). The enzyme catalyses guanosine(in) = guanosine(out). The catalysed reaction is inosine(in) = inosine(out). It carries out the reaction uridine(out) = uridine(in). It catalyses the reaction cytidine(in) = cytidine(out). The enzyme catalyses thymidine(in) = thymidine(out). The catalysed reaction is 2'-deoxyadenosine(in) = 2'-deoxyadenosine(out). It carries out the reaction 2'-deoxycytidine(in) = 2'-deoxycytidine(out). It catalyses the reaction guanine(out) = guanine(in). The enzyme catalyses uracil(in) = uracil(out). The catalysed reaction is (R)-noradrenaline(out) = (R)-noradrenaline(in). It carries out the reaction dopamine(out) = dopamine(in). It catalyses the reaction serotonin(out) = serotonin(in). The enzyme catalyses tyramine(in) = tyramine(out). The catalysed reaction is ATP(in) = ATP(out). Uniporter that mediates the facilitative transport of nucleoside across lysosomal and mitochondrial membranes. Functions as a non-electrogenic Na(+)-independent transporter. Substrate transport is pH-dependent and enhanced under acidic condition, probably reflecting the location of the transporter in acidic intracellular compartments. Proton is not a cotransporting ion but most likely change the ionization state of the transporter which dictates transport-permissible/impermissible conformation for nucleoside translocation. May direct the nucleoside transport from lysosomes to cytosol or cytosol to mitochondria to facilitate the fundamental function of salvage synthesis of nucleic acids. Involved in the transport of nucleosides (adenosine, guanosine, uridine, thymidine, cytidine and inosine) and deoxynucleosides (deoxyadenosine, deoxycytidine). Also mediates transport of purine nucleobases (adenine, guanine) and pyrimidine nucleobases (uracil). Also able to transport monoamine neurotransmitters dopamine, serotonin, noradrenaline and tyramine. Capable of transporting ATP. Mediates nucleoside export from lysosomes in macrophages, which regulates macrophage functions and numbers. This is Equilibrative nucleoside transporter 3 from Homo sapiens (Human).